A 494-amino-acid chain; its full sequence is Cytochrome P450 2A8 (494 aa).

Cys-439 serves as a coordination point for heme.

The protein belongs to the cytochrome P450 family. Heme is required as a cofactor. Liver.

Its subcellular location is the endoplasmic reticulum membrane. It is found in the microsome membrane. The catalysed reaction is an organic molecule + reduced [NADPH--hemoprotein reductase] + O2 = an alcohol + oxidized [NADPH--hemoprotein reductase] + H2O + H(+). Functionally, highly active in 7-ethoxycoumarin O-deethylation, and benzphetamine N-demethylation; moderately active in testosterone 7-alpha-hydroxylation, ethylmorphine N-demethylation, p-nitroanisole O-demethylation; and only slightly active in benzopyrene 3-hydroxylation, 7-ethoxyresorufin O-deethylation, testosterone 2-alpha-hydroxylation and testosterone 17-oxidation. Competent in the metabolic activation of aflatoxin B1. This Mesocricetus auratus (Golden hamster) protein is Cytochrome P450 2A8 (CYP2A8).